The sequence spans 191 residues: NAD(P)H dehydrogenase (quinone) (191 aa).

The region spanning 4–184 is the Flavodoxin-like domain; that stretch reads ILVIFHSITG…VAKMLGKRVA (181 aa). Residues 10 to 15, 83 to 85, and 118 to 124 contribute to the FMN site; these read SITGNT, TRF, and SNEMPHG.

Belongs to the WrbA family. In terms of assembly, homodimer and homotetramer; in equilibrium. FMN serves as cofactor.

It catalyses the reaction a quinone + NADH + H(+) = a quinol + NAD(+). The enzyme catalyses a quinone + NADPH + H(+) = a quinol + NADP(+). Its function is as follows. It seems to function in response to environmental stress when various electron transfer chains are affected or when the environment is highly oxidizing. It reduces quinones to the hydroquinone state to prevent interaction of the semiquinone with O2 and production of superoxide. It prefers NADH over NADPH. This chain is NAD(P)H dehydrogenase (quinone), found in Archaeoglobus fulgidus (strain ATCC 49558 / DSM 4304 / JCM 9628 / NBRC 100126 / VC-16).